A 258-amino-acid polypeptide reads, in one-letter code: Sec-independent protein translocase protein TatC (258 aa).

At S2–C23 the chain is on the cytoplasmic side. A helical transmembrane segment spans residues I24 to L44. Residues V45–T75 lie on the Periplasmic side of the membrane. The chain crosses the membrane as a helical span at residues F76–A96. Topologically, residues P97 to S115 are cytoplasmic. Residues L116–F136 traverse the membrane as a helical segment. Residues L137 to S156 lie on the Periplasmic side of the membrane. Residues F157–L177 traverse the membrane as a helical segment. At L178–K192 the chain is on the cytoplasmic side. A helical membrane pass occupies residues R193–P210. Residue D211 is a topological domain, periplasmic. Residues V212–F232 traverse the membrane as a helical segment. The Cytoplasmic portion of the chain corresponds to S233–E258.

Belongs to the TatC family. In terms of assembly, the Tat system comprises two distinct complexes: a TatABC complex, containing multiple copies of TatA, TatB and TatC subunits, and a separate TatA complex, containing only TatA subunits. Substrates initially bind to the TatABC complex, which probably triggers association of the separate TatA complex to form the active translocon.

It is found in the cell inner membrane. Its function is as follows. Part of the twin-arginine translocation (Tat) system that transports large folded proteins containing a characteristic twin-arginine motif in their signal peptide across membranes. Together with TatB, TatC is part of a receptor directly interacting with Tat signal peptides. This Escherichia coli O6:H1 (strain CFT073 / ATCC 700928 / UPEC) protein is Sec-independent protein translocase protein TatC.